A 521-amino-acid chain; its full sequence is Bifunctional purine biosynthesis protein PurH (521 aa).

One can recognise an MGS-like domain in the interval 1 to 145 (MIKQALISVS…KNHKDVIVIC (145 aa)).

The protein belongs to the PurH family.

The enzyme catalyses (6R)-10-formyltetrahydrofolate + 5-amino-1-(5-phospho-beta-D-ribosyl)imidazole-4-carboxamide = 5-formamido-1-(5-phospho-D-ribosyl)imidazole-4-carboxamide + (6S)-5,6,7,8-tetrahydrofolate. It catalyses the reaction IMP + H2O = 5-formamido-1-(5-phospho-D-ribosyl)imidazole-4-carboxamide. It functions in the pathway purine metabolism; IMP biosynthesis via de novo pathway; 5-formamido-1-(5-phospho-D-ribosyl)imidazole-4-carboxamide from 5-amino-1-(5-phospho-D-ribosyl)imidazole-4-carboxamide (10-formyl THF route): step 1/1. The protein operates within purine metabolism; IMP biosynthesis via de novo pathway; IMP from 5-formamido-1-(5-phospho-D-ribosyl)imidazole-4-carboxamide: step 1/1. The protein is Bifunctional purine biosynthesis protein PurH of Herminiimonas arsenicoxydans.